We begin with the raw amino-acid sequence, 101 residues long: Small ribosomal subunit protein bS18c (101 aa).

Belongs to the bacterial ribosomal protein bS18 family. Part of the 30S ribosomal subunit.

It localises to the plastid. The protein resides in the chloroplast. This chain is Small ribosomal subunit protein bS18c, found in Vitis vinifera (Grape).